A 374-amino-acid chain; its full sequence is Heat stress transcription factor A-8 (374 aa).

Residues 17 to 112 (VAPFLRKCYD…LLKNVIRRKN (96 aa)) mediate DNA binding. Residues 126-192 (TTYAQEKSGL…EMLSFLVMVM (67 aa)) are hydrophobic repeat HR-A/B. Residues 285-294 (DGAWEKLLLL) carry the AHA1 motif. The short motif at 298 to 303 (RKKTKK) is the Nuclear localization signal element. The short motif at 330–339 (KSYMLKLISE) is the AHA2 element. The short motif at 363-370 (LTEQMELL) is the Nuclear export signal element.

This sequence belongs to the HSF family. Class A subfamily. As to quaternary structure, homotrimer. Exhibits temperature-dependent phosphorylation.

It localises to the cytoplasm. The protein localises to the nucleus. Transcriptional activator that specifically binds DNA sequence 5'-AGAAnnTTCT-3' known as heat shock promoter elements (HSE). The polypeptide is Heat stress transcription factor A-8 (HSFA8) (Arabidopsis thaliana (Mouse-ear cress)).